The following is a 365-amino-acid chain: TD and POZ domain-containing protein 1 (365 aa).

The MATH domain maps to 19–149 (KFCYKWTISN…EDQLTICCKV (131 aa)). Residues 188–250 (TDCCLLVAGH…EMMGFIYTGK (63 aa)) enclose the BTB domain.

Belongs to the Tdpoz family.

The polypeptide is TD and POZ domain-containing protein 1 (Mus musculus (Mouse)).